Consider the following 453-residue polypeptide: DNA repair protein RadA (453 aa).

The C4-type zinc finger occupies 10–27; that stretch reads CTECGATFPKWAGQCADC. 96–103 serves as a coordination point for ATP; the sequence is GDPGIGKS. The RadA KNRFG motif motif lies at 252 to 256; it reads KNRFG. A lon-protease-like region spans residues 351–453; sequence DVFLNVVGGV…LEQALDALFE (103 aa).

It belongs to the RecA family. RadA subfamily.

Its function is as follows. DNA-dependent ATPase involved in processing of recombination intermediates, plays a role in repairing DNA breaks. Stimulates the branch migration of RecA-mediated strand transfer reactions, allowing the 3' invading strand to extend heteroduplex DNA faster. Binds ssDNA in the presence of ADP but not other nucleotides, has ATPase activity that is stimulated by ssDNA and various branched DNA structures, but inhibited by SSB. Does not have RecA's homology-searching function. This is DNA repair protein RadA from Pseudomonas aeruginosa (strain ATCC 15692 / DSM 22644 / CIP 104116 / JCM 14847 / LMG 12228 / 1C / PRS 101 / PAO1).